A 101-amino-acid polypeptide reads, in one-letter code: MLVFLHAVLVTALILLLIGRIQLLERLLLSHLLNLTTVSNVLGVPDSSLRVNCLQLLKPDCLDFNILHKVLAETRLLVVVLRVIFLVLLGFSCYTLLGALF.

An N-terminal signal peptide occupies residues 1 to 23; it reads MLVFLHAVLVTALILLLIGRIQL. The helical transmembrane segment at 76 to 96 threads the bilayer; the sequence is LLVVVLRVIFLVLLGFSCYTL.

It belongs to the coronaviruses ns7/ns7a protein family.

Its subcellular location is the host membrane. Functionally, may function in the formation of membrane-bound replication complexes or in the assembly of the virus. This chain is Non-structural 7a protein, found in Feline enteric coronavirus (strain 79-1683) (FeCoV).